The following is a 337-amino-acid chain: 2-oxoglutarate-dependent dioxygenase frbA (337 aa).

A Fe2OG dioxygenase domain is found at 175–290 (CSAELRLNHY…RHSLAYFGKP (116 aa)). Residues histidine 202, aspartate 204, and histidine 262 each coordinate Fe cation. Arginine 281 is a binding site for 2-oxoglutarate.

The protein belongs to the iron/ascorbate-dependent oxidoreductase family. Fe(2+) serves as cofactor.

It functions in the pathway antifungal biosynthesis. Functionally, 2-oxoglutarate-dependent dioxygenase; part of the gene cluster that mediates the biosynthesis of the antifungal antibiotic FR901469, an inhibitor of beta-1,3-glucansynthase, exerting antifungal activity against the pathogenes Candida albicans and Aspergillus fumigatus. FR901469 is a cyclic depsipeptide containing 12 amino acid residues and a fatty acid chain. The NRPS frbI contains 12 modules responsible for the formation of the depsipeptide backbone which is denoted as Acyl-Thr-Ala-Tyr-Val-4OHPro-Thr-Thr-3OHPro-threo3OHGln-Gly-Thr-Orn-OH (C71H116N14O23). The PKS frbB is probably involved in the production of the hydrocarbon chain, and the acyl-CoA ligase frbC might be involved in the transport of the chain to the peptide ptoduct of frbI. Because FR901469 contains 3 hydroxylated amino acid residues, the 3 oxygenases frbA, frbH, and frbJ might be participating in amino acid hydroxylation. As no thioesterase domains were detected in frbI or frbB, the thioesterases frbD and frbE may instead release and cyclize the products of the NRPS and PKS, respectively. The protein is 2-oxoglutarate-dependent dioxygenase frbA of Dothideomycetidae sp. (strain 11243) (Fungal sp. (strain No.11243)).